The sequence spans 103 residues: Protein S100-A16 (103 aa).

Residues 12–47 (VVVLVENFYKYVSKHSLVKNKISKSSFRKMLQKELN) form the EF-hand 1; degenerate domain. Positions 54-89 (GNRKAADKLIQNLDANHDGRISFDEYWTLIGGITSP) constitute an EF-hand 2 domain. Aspartate 67, asparagine 69, aspartate 71, arginine 73, and glutamate 78 together coordinate Ca(2+).

This sequence belongs to the S-100 family. As to quaternary structure, homodimer. Interacts with TP53.

The protein resides in the nucleus. It is found in the nucleolus. It localises to the cytoplasm. Calcium-binding protein. Binds one calcium ion per monomer. Can promote differentiation of adipocytes (in vitro). Overexpression in preadipocytes increases their proliferation, enhances adipogenesis and reduces insulin-stimulated glucose uptake. In Bos taurus (Bovine), this protein is Protein S100-A16 (S100A16).